The sequence spans 106 residues: Iron-sulfur cluster assembly protein CyaY (106 aa).

The protein belongs to the frataxin family.

In terms of biological role, involved in iron-sulfur (Fe-S) cluster assembly. May act as a regulator of Fe-S biogenesis. This chain is Iron-sulfur cluster assembly protein CyaY, found in Salmonella typhimurium (strain LT2 / SGSC1412 / ATCC 700720).